A 352-amino-acid polypeptide reads, in one-letter code: Transcription factor MYB51 (352 aa).

HTH myb-type domains lie at glutamate 10–leucine 62 and arginine 63–leucine 117. 2 DNA-binding regions (H-T-H motif) span residues tryptophan 38–leucine 62 and tryptophan 90–isoleucine 113. Disordered stretches follow at residues lysine 128 to asparagine 157 and glycine 198 to serine 219. Residues serine 203–serine 219 are compositionally biased toward low complexity.

As to quaternary structure, can form complexes with MYC2, MYC3 or MYC4. As to expression, expressed in vegetative parts of the plant, mainly in mature rosette leaves and in trichomes. Detected in roots, but not in mature flowers or siliques.

It is found in the nucleus. Its function is as follows. Transcription factor positively regulating indolic glucosinolate biosynthetic pathway genes. In Arabidopsis thaliana (Mouse-ear cress), this protein is Transcription factor MYB51 (MYB51).